Consider the following 726-residue polypeptide: Transcription factor 12 (726 aa).

Disordered stretches follow at residues 27 to 75, 89 to 223, 243 to 267, 289 to 309, 345 to 367, 380 to 409, 501 to 532, 558 to 624, and 694 to 726; these read SPPV…SRGF, LVSH…TFFD, YGGM…HSHD, SSFH…HTPP, PDHT…SPLA, TASG…YENS, MGSV…SSEL, VENQ…ERRM, and EEEK…MGHL. Over residues 29 to 47 the composition is skewed to polar residues; it reads PVNSGKNRPTTLGSSQFTA. Positions 55-74 are enriched in low complexity; it reads SQASWASGGQSSPSFESSRG. Composition is skewed to polar residues over residues 145–157, 249–263, and 291–309; these read PGKS…SYTG, GSSS…YSNL, and FHRS…HTPP. Residues 348–359 are compositionally biased toward low complexity; it reads TSSSFPSNPSTP. 2 stretches are compositionally biased toward polar residues: residues 389–409 and 510–532; these read GTTQ…YENS and GSLN…SSEL. Residues 559–575 show a composition bias toward basic and acidic residues; the sequence is ENQDKDDMHDSHASDDL. A compositionally biased stretch (low complexity) spans 592–603; sequence SSRPSCELSCSS. Basic and acidic residues predominate over residues 612–624; the sequence is PEQKAERERERRM. Residues 621-674 enclose the bHLH domain; it reads ERRMANNARERLRVRDINEAFKELGRMCQLHLKSEKPQTKLLILHQAVAVILSL. The interval 676–699 is class A specific domain; sequence QQVRERNLNPKAACLKRREEEKVS. Positions 717–726 are enriched in polar residues; that stretch reads TDTSNPMGHL.

In terms of assembly, efficient DNA binding requires dimerization with another bHLH protein.

The protein localises to the nucleus. Functionally, transcriptional regulator. Involved in the initiation of neuronal differentiation. Activates transcription by binding to the E box (5'-CANNTG-3'). May be involved in the functional network that regulates the development of the GnRH axis. The chain is Transcription factor 12 (tcf12) from Danio rerio (Zebrafish).